The primary structure comprises 248 residues: Ribonuclease PH (248 aa).

Residues Arg-86 and 124–126 contribute to the phosphate site; that span reads GTR.

This sequence belongs to the RNase PH family. In terms of assembly, homohexameric ring arranged as a trimer of dimers.

It carries out the reaction tRNA(n+1) + phosphate = tRNA(n) + a ribonucleoside 5'-diphosphate. Phosphorolytic 3'-5' exoribonuclease that plays an important role in tRNA 3'-end maturation. Removes nucleotide residues following the 3'-CCA terminus of tRNAs; can also add nucleotides to the ends of RNA molecules by using nucleoside diphosphates as substrates, but this may not be physiologically important. Probably plays a role in initiation of 16S rRNA degradation (leading to ribosome degradation) during starvation. This Clostridium perfringens (strain SM101 / Type A) protein is Ribonuclease PH.